The sequence spans 163 residues: NADH-quinone oxidoreductase subunit B (163 aa).

The [4Fe-4S] cluster site is built by cysteine 32, cysteine 33, cysteine 98, and cysteine 127.

This sequence belongs to the complex I 20 kDa subunit family. As to quaternary structure, NDH-1 is composed of 14 different subunits. Subunits NuoB, C, D, E, F, and G constitute the peripheral sector of the complex. It depends on [4Fe-4S] cluster as a cofactor.

The protein resides in the cell inner membrane. The enzyme catalyses a quinone + NADH + 5 H(+)(in) = a quinol + NAD(+) + 4 H(+)(out). Functionally, NDH-1 shuttles electrons from NADH, via FMN and iron-sulfur (Fe-S) centers, to quinones in the respiratory chain. Couples the redox reaction to proton translocation (for every two electrons transferred, four hydrogen ions are translocated across the cytoplasmic membrane), and thus conserves the redox energy in a proton gradient. The sequence is that of NADH-quinone oxidoreductase subunit B from Pelobacter propionicus (strain DSM 2379 / NBRC 103807 / OttBd1).